A 353-amino-acid chain; its full sequence is UDP-N-acetylglucosamine--N-acetylmuramyl-(pentapeptide) pyrophosphoryl-undecaprenol N-acetylglucosamine transferase (353 aa).

UDP-N-acetyl-alpha-D-glucosamine is bound by residues 10 to 12 (TGG), Asn124, Ser183, and Gln283.

Belongs to the glycosyltransferase 28 family. MurG subfamily.

It localises to the cell inner membrane. It carries out the reaction di-trans,octa-cis-undecaprenyl diphospho-N-acetyl-alpha-D-muramoyl-L-alanyl-D-glutamyl-meso-2,6-diaminopimeloyl-D-alanyl-D-alanine + UDP-N-acetyl-alpha-D-glucosamine = di-trans,octa-cis-undecaprenyl diphospho-[N-acetyl-alpha-D-glucosaminyl-(1-&gt;4)]-N-acetyl-alpha-D-muramoyl-L-alanyl-D-glutamyl-meso-2,6-diaminopimeloyl-D-alanyl-D-alanine + UDP + H(+). It participates in cell wall biogenesis; peptidoglycan biosynthesis. Functionally, cell wall formation. Catalyzes the transfer of a GlcNAc subunit on undecaprenyl-pyrophosphoryl-MurNAc-pentapeptide (lipid intermediate I) to form undecaprenyl-pyrophosphoryl-MurNAc-(pentapeptide)GlcNAc (lipid intermediate II). This Helicobacter acinonychis (strain Sheeba) protein is UDP-N-acetylglucosamine--N-acetylmuramyl-(pentapeptide) pyrophosphoryl-undecaprenol N-acetylglucosamine transferase.